The following is a 103-amino-acid chain: Large ribosomal subunit protein bL21 (103 aa).

This sequence belongs to the bacterial ribosomal protein bL21 family. Part of the 50S ribosomal subunit. Contacts protein L20.

In terms of biological role, this protein binds to 23S rRNA in the presence of protein L20. This chain is Large ribosomal subunit protein bL21, found in Actinobacillus succinogenes (strain ATCC 55618 / DSM 22257 / CCUG 43843 / 130Z).